Here is a 129-residue protein sequence, read N- to C-terminus: uncharacterized protein (129 aa).

The first 20 residues, 1 to 20 (MIYPLFRICILGAFLLGSYA), serve as a signal peptide directing secretion.

This is an uncharacterized protein from Saccharomyces cerevisiae (strain ATCC 204508 / S288c) (Baker's yeast).